Here is a 279-residue protein sequence, read N- to C-terminus: GATA transcription factor 15 (279 aa).

Residues 52 to 94 (AYDDHSTVTTSPSSPSSSSTGSVDCTLSLGTPSSRRAEPVAAA) form a disordered region. A compositionally biased stretch (low complexity) spans 58–74 (TVTTSPSSPSSSSTGSV). The segment at 154-179 (CANCGTASTPLWRNGPRGPKSLCNAC) adopts a GATA-type zinc-finger fold.

It belongs to the type IV zinc-finger family. Class B subfamily. Highly expressed in inflorescences. Expressed in vascular bundles of root stele within the elongation zones, of elongating upper internodes and of the junctions of leaf blades and sheaths.

In terms of biological role, probable transcription factor that regulates organogenesis during transition from the vegetative to the reproductive phase. Regulates the expression of CYP78A11/PLA1, HD3A and MADS1 during reproductive development in rice. May act upstream of CYP78A11/PLA1 during panicle development. Acts independently of the photoperiodic and gibberellin signaling pathways. The sequence is that of GATA transcription factor 15 from Oryza sativa subsp. japonica (Rice).